We begin with the raw amino-acid sequence, 540 residues long: Phosphoenolpyruvate carboxykinase (ATP) (540 aa).

Substrate is bound at residue Arg65. Position 87 is an N6-acetyllysine (Lys87). 2 residues coordinate substrate: Tyr207 and Lys213. Residues Lys213, His232, and 248–256 (GLSGTGKTT) contribute to the ATP site. Mn(2+) contacts are provided by Lys213 and His232. Residue Asp269 coordinates Mn(2+). ATP is bound by residues Glu297, Arg333, 449 to 450 (RI), and Thr455. Arg333 lines the substrate pocket. Lys523 carries the N6-acetyllysine modification.

The protein belongs to the phosphoenolpyruvate carboxykinase (ATP) family. Monomer. Requires Mn(2+) as cofactor.

Its subcellular location is the cytoplasm. It catalyses the reaction oxaloacetate + ATP = phosphoenolpyruvate + ADP + CO2. It participates in carbohydrate biosynthesis; gluconeogenesis. In terms of biological role, involved in the gluconeogenesis. Catalyzes the conversion of oxaloacetate (OAA) to phosphoenolpyruvate (PEP) through direct phosphoryl transfer between the nucleoside triphosphate and OAA. This chain is Phosphoenolpyruvate carboxykinase (ATP), found in Shigella dysenteriae serotype 1 (strain Sd197).